Reading from the N-terminus, the 78-residue chain is MAKTASSLVLPIIFLVMFALVEQNMGCMAVLGSCGVITDCSGECISRFGPQARGYCDRDGGSGTCVCVYPCPADKPHM.

An N-terminal signal peptide occupies residues methionine 1–glutamine 23. 4 disulfide bridges follow: cysteine 27-cysteine 71, cysteine 34-cysteine 56, cysteine 40-cysteine 65, and cysteine 44-cysteine 67.

Belongs to the DEFL family.

The protein resides in the secreted. The sequence is that of Defensin-like protein 171 (LCR61) from Arabidopsis thaliana (Mouse-ear cress).